The chain runs to 1215 residues: Chromosome segregation protein sudA (1215 aa).

Position 32–39 (32–39) interacts with ATP; the sequence is GRNGSGKS. Residues 177-522 are a coiled coil; the sequence is KIMHETNSKR…LSQMMDHNTS (346 aa). A disordered region spans residues 313–332; that stretch reads SDNQAAAQESKARHDESLKA. An SMC hinge domain is found at 538–650; the sequence is EGVYGTLAEL…PNLQVASQYA (113 aa). The disordered stretch occupies residues 654 to 676; it reads GVNATTPEGDRSDKRGALTGGFH. Residues 684–1091 are a coiled coil; the sequence is DAVKNLAKWR…EEAKHSVENY (408 aa).

It belongs to the SMC family. SMC3 subfamily.

It is found in the nucleus. In terms of biological role, involved in chromosome segregation in mitosis. This chain is Chromosome segregation protein sudA (sudA), found in Emericella nidulans (strain FGSC A4 / ATCC 38163 / CBS 112.46 / NRRL 194 / M139) (Aspergillus nidulans).